An 86-amino-acid chain; its full sequence is Bacteriocin thailandicin (86 aa).

The segment at residues Leu23 to Trp86 is a cross-link (cyclopeptide (Leu-Trp)).

It is found in the secreted. Cyclopeptide antibiotic with bacteriolytic activity against the Gram-positive bacteria S.aureus and S.thermophilus, and lower activity against the Gram-negative bacteria E.coli and P.aeruginosa. The sequence is that of Bacteriocin thailandicin from Enterococcus thailandicus.